The sequence spans 503 residues: Lysine--tRNA ligase (503 aa).

Mg(2+) contacts are provided by Glu414 and Glu421.

This sequence belongs to the class-II aminoacyl-tRNA synthetase family. In terms of assembly, homodimer. Mg(2+) is required as a cofactor.

The protein resides in the cytoplasm. The enzyme catalyses tRNA(Lys) + L-lysine + ATP = L-lysyl-tRNA(Lys) + AMP + diphosphate. This is Lysine--tRNA ligase from Neisseria meningitidis serogroup B (strain ATCC BAA-335 / MC58).